The sequence spans 315 residues: GTPase Era (315 aa).

Positions 21–190 constitute an Era-type G domain; the sequence is RSGFVAIVGR…QSALEARLDP (170 aa). The interval 29–36 is G1; the sequence is GRPNVGKS. Position 29 to 36 (29 to 36) interacts with GTP; the sequence is GRPNVGKS. The interval 55–59 is G2; the sequence is QTTRN. The interval 76 to 79 is G3; that stretch reads DTPG. Residues 76 to 80 and 138 to 141 each bind GTP; these read DTPGI and NKQD. The tract at residues 138 to 141 is G4; that stretch reads NKQD. The segment at 169–171 is G5; it reads FSA. In terms of domain architecture, KH type-2 spans 221-297; that stretch reads TRQEVPHSVA…YLKLFVKVEP (77 aa).

This sequence belongs to the TRAFAC class TrmE-Era-EngA-EngB-Septin-like GTPase superfamily. Era GTPase family. As to quaternary structure, monomer.

It localises to the cytoplasm. The protein localises to the cell inner membrane. In terms of biological role, an essential GTPase that binds both GDP and GTP, with rapid nucleotide exchange. Plays a role in 16S rRNA processing and 30S ribosomal subunit biogenesis and possibly also in cell cycle regulation and energy metabolism. The protein is GTPase Era of Synechocystis sp. (strain ATCC 27184 / PCC 6803 / Kazusa).